Here is a 174-residue protein sequence, read N- to C-terminus: RNA pyrophosphohydrolase (174 aa).

Residues G6–K149 form the Nudix hydrolase domain. A Nudix box motif is present at residues G38–G59.

This sequence belongs to the Nudix hydrolase family. RppH subfamily. It depends on a divalent metal cation as a cofactor.

Functionally, accelerates the degradation of transcripts by removing pyrophosphate from the 5'-end of triphosphorylated RNA, leading to a more labile monophosphorylated state that can stimulate subsequent ribonuclease cleavage. The polypeptide is RNA pyrophosphohydrolase (Neisseria meningitidis serogroup C (strain 053442)).